The sequence spans 334 residues: tRNA uridine(34) hydroxylase (334 aa).

One can recognise a Rhodanese domain in the interval 123-217 (SDPDVILVDT…YLEEVKQEES (95 aa)). C177 acts as the Cysteine persulfide intermediate in catalysis.

It belongs to the TrhO family.

The catalysed reaction is uridine(34) in tRNA + AH2 + O2 = 5-hydroxyuridine(34) in tRNA + A + H2O. In terms of biological role, catalyzes oxygen-dependent 5-hydroxyuridine (ho5U) modification at position 34 in tRNAs. The protein is tRNA uridine(34) hydroxylase of Shewanella putrefaciens (strain CN-32 / ATCC BAA-453).